Reading from the N-terminus, the 963-residue chain is Phosphoenolpyruvate carboxylase 2 (963 aa).

A Phosphoserine modification is found at serine 11. Catalysis depends on residues histidine 172 and lysine 599. The residue at position 701 (serine 701) is a Phosphoserine.

It belongs to the PEPCase type 1 family. As to quaternary structure, homotetramer. Mg(2+) is required as a cofactor. As to expression, expressed in all plant organs, with higher levels in stems and leaves.

Its subcellular location is the cytoplasm. The catalysed reaction is oxaloacetate + phosphate = phosphoenolpyruvate + hydrogencarbonate. With respect to regulation, by light-reversible phosphorylation. Its function is as follows. Through the carboxylation of phosphoenolpyruvate (PEP) it forms oxaloacetate, a four-carbon dicarboxylic acid source for the tricarboxylic acid cycle. In Arabidopsis thaliana (Mouse-ear cress), this protein is Phosphoenolpyruvate carboxylase 2 (PPC2).